Here is a 296-residue protein sequence, read N- to C-terminus: Aspartate and glycine-rich protein (296 aa).

Gly residues predominate over residues 1 to 77 (GDGENGNGNG…GNGNGNGNGN (77 aa)). Disordered stretches follow at residues 1–219 (GDGE…DNGG) and 233–296 (RARA…YTSY). 2 stretches are compositionally biased toward acidic residues: residues 80–96 (FDDD…DDWN) and 103–194 (NGDD…DDRW). The segment covering 198–210 (NGNGNGNGNGNGN) has biased composition (gly residues). Residues 233-243 (RARAAASAAGR) show a composition bias toward low complexity. Gly residues predominate over residues 244-259 (SRGGSGGSGGSGGSGG). The span at 270-281 (RAFASARASSGN) shows a compositional bias: low complexity.

As to expression, component of the acid-soluble and acid-insoluble organic matrix of calcified shell layers (at protein level).

Its subcellular location is the secreted. This Haliotis asinina (Donkey's ear abalone) protein is Aspartate and glycine-rich protein.